A 154-amino-acid chain; its full sequence is 17.4 kDa class I heat shock protein (154 aa).

In terms of domain architecture, sHSP spans 40–154 (DAAAFAGARI…PDVKSIQITG (115 aa)).

It belongs to the small heat shock protein (HSP20) family. In terms of assembly, may form oligomeric structures.

The protein localises to the cytoplasm. This Oryza sativa subsp. japonica (Rice) protein is 17.4 kDa class I heat shock protein (HSP17.4).